Reading from the N-terminus, the 382-residue chain is Mannitol-1-phosphate 5-dehydrogenase (382 aa).

3–14 serves as a coordination point for NAD(+); that stretch reads ALHFGAGNIGRG.

Belongs to the mannitol dehydrogenase family.

The catalysed reaction is D-mannitol 1-phosphate + NAD(+) = beta-D-fructose 6-phosphate + NADH + H(+). The polypeptide is Mannitol-1-phosphate 5-dehydrogenase (Salmonella agona (strain SL483)).